A 382-amino-acid polypeptide reads, in one-letter code: Apolipoprotein A-IV (382 aa).

Residues 1–20 form the signal peptide; the sequence is MFLRAVVLTLALVAVTGARA. 13 repeat units span residues 33-54, 60-81, 82-103, 115-136, 137-158, 159-180, 181-202, 203-224, 225-246, 247-268, 269-286, 287-308, and 309-330. The tract at residues 33–330 is 13 X 22 AA approximate tandem repeats; sequence DYFSQLSNNA…QVEELRQKLG (298 aa). Residues 362-382 are disordered; sequence ENQDMPLALPEQEQAPGPLES.

Belongs to the apolipoprotein A1/A4/E family. Homodimer.

It is found in the secreted. Its function is as follows. May have a role in chylomicrons and VLDL secretion and catabolism. Required for efficient activation of lipoprotein lipase by ApoC-II; potent activator of LCAT. Apoa-IV is a major component of HDL and chylomicrons. The protein is Apolipoprotein A-IV (APOA4) of Acinonyx jubatus (Cheetah).